The chain runs to 335 residues: DNA polymerase beta (335 aa).

A Glycyl lysine isopeptide (Lys-Gly) (interchain with G-Cter in ubiquitin) cross-link involves residue lysine 41. Position 60 (lysine 60) interacts with K(+). Lysine 60 is a binding site for Na(+). Lysine 61 participates in a covalent cross-link: Glycyl lysine isopeptide (Lys-Gly) (interchain with G-Cter in ubiquitin). The K(+) site is built by leucine 62 and valine 65. The Na(+) site is built by leucine 62 and valine 65. Lysine 72 functions as the Nucleophile; Schiff-base intermediate with DNA; for 5'-dRP lyase activity in the catalytic mechanism. Position 72 is an N6-acetyllysine (lysine 72). A Glycyl lysine isopeptide (Lys-Gly) (interchain with G-Cter in ubiquitin) cross-link involves residue lysine 81. Arginine 83 carries the post-translational modification Omega-N-methylarginine; by PRMT6. The K(+) site is built by threonine 101, valine 103, and isoleucine 106. 3 residues coordinate Na(+): threonine 101, valine 103, and isoleucine 106. Arginine 149 serves as a coordination point for dATP. Arginine 149 provides a ligand contact to dCTP. Residue arginine 149 coordinates dGTP. Arginine 149 is a dTTP binding site. An Omega-N-methylarginine; by PRMT6 modification is found at arginine 152. DATP is bound by residues serine 180, arginine 183, glycine 189, and aspartate 190. DCTP contacts are provided by serine 180, arginine 183, glycine 189, and aspartate 190. Residues serine 180, arginine 183, glycine 189, aspartate 190, and aspartate 192 each contribute to the dGTP site. Residues serine 180, arginine 183, glycine 189, and aspartate 190 each contribute to the dTTP site. The interval 183–192 is DNA-binding; that stretch reads RGAESSGDMD. Positions 190, 192, and 256 each coordinate Mg(2+).

Belongs to the DNA polymerase type-X family. Monomer. Binds single-stranded DNA (ssDNA). Interacts with APEX1, LIG1, LIG3, FEN1, PCNA and XRCC1. Interacts with HUWE1/ARF-BP1, STUB1/CHIP and USP47. Interacts with FAM168A. Mg(2+) serves as cofactor. Post-translationally, methylation by PRMT6 stimulates the polymerase activity by enhancing DNA binding and processivity. In terms of processing, ubiquitinated at Lys-41, Lys-61 and Lys-81: monoubiquitinated by HUWE1/ARF-BP1. Monoubiquitinated protein is then the target of STUB1/CHIP, which catalyzes polyubiquitination from monoubiquitin, leading to degradation by the proteasome. USP47 mediates the deubiquitination of monoubiquitinated protein, preventing polyubiquitination by STUB1/CHIP and its subsequent degradation.

It localises to the nucleus. Its subcellular location is the cytoplasm. It carries out the reaction DNA(n) + a 2'-deoxyribonucleoside 5'-triphosphate = DNA(n+1) + diphosphate. The enzyme catalyses a 5'-end 2'-deoxyribose-2'-deoxyribonucleotide-DNA = (2E,4S)-4-hydroxypenten-2-al-5-phosphate + a 5'-end 5'-phospho-2'-deoxyribonucleoside-DNA + H(+). It catalyses the reaction 2'-deoxyribonucleotide-(2'-deoxyribose 5'-phosphate)-2'-deoxyribonucleotide-DNA = a 3'-end 2'-deoxyribonucleotide-(2,3-dehydro-2,3-deoxyribose 5'-phosphate)-DNA + a 5'-end 5'-phospho-2'-deoxyribonucleoside-DNA + H(+). In terms of biological role, repair polymerase that plays a key role in base-excision repair. During this process, the damaged base is excised by specific DNA glycosylases, the DNA backbone is nicked at the abasic site by an apurinic/apyrimidic (AP) endonuclease, and POLB removes 5'-deoxyribose-phosphate from the preincised AP site acting as a 5'-deoxyribose-phosphate lyase (5'-dRP lyase); through its DNA polymerase activity, it adds one nucleotide to the 3' end of the arising single-nucleotide gap. Conducts 'gap-filling' DNA synthesis in a stepwise distributive fashion rather than in a processive fashion as for other DNA polymerases. It is also able to cleave sugar-phosphate bonds 3' to an intact AP site, acting as an AP lyase. The polypeptide is DNA polymerase beta (POLB) (Homo sapiens (Human)).